The chain runs to 485 residues: UDP-N-acetylmuramate--L-alanine ligase (485 aa).

ATP is bound at residue 125–131 (GTHGKTT).

This sequence belongs to the MurCDEF family.

The protein resides in the cytoplasm. It catalyses the reaction UDP-N-acetyl-alpha-D-muramate + L-alanine + ATP = UDP-N-acetyl-alpha-D-muramoyl-L-alanine + ADP + phosphate + H(+). It functions in the pathway cell wall biogenesis; peptidoglycan biosynthesis. In terms of biological role, cell wall formation. This chain is UDP-N-acetylmuramate--L-alanine ligase, found in Stutzerimonas stutzeri (strain A1501) (Pseudomonas stutzeri).